The sequence spans 338 residues: Tetraacyldisaccharide 4'-kinase (338 aa).

63–70 lines the ATP pocket; sequence TVGGSGKT.

It belongs to the LpxK family.

It carries out the reaction a lipid A disaccharide + ATP = a lipid IVA + ADP + H(+). It functions in the pathway glycolipid biosynthesis; lipid IV(A) biosynthesis; lipid IV(A) from (3R)-3-hydroxytetradecanoyl-[acyl-carrier-protein] and UDP-N-acetyl-alpha-D-glucosamine: step 6/6. Its function is as follows. Transfers the gamma-phosphate of ATP to the 4'-position of a tetraacyldisaccharide 1-phosphate intermediate (termed DS-1-P) to form tetraacyldisaccharide 1,4'-bis-phosphate (lipid IVA). This Shewanella loihica (strain ATCC BAA-1088 / PV-4) protein is Tetraacyldisaccharide 4'-kinase.